The following is a 588-amino-acid chain: Proteasome-associated ATPase (588 aa).

The segment covering 1-10 (MAAHDDDMNR) has biased composition (basic and acidic residues). The disordered stretch occupies residues 1–23 (MAAHDDDMNRGIRPGRGSDDPAG). Positions 47-94 (RILEERIVELQTNLAGVSAQNERLANTLREARDQIVALKEEVDRLAQP) form a coiled coil. 276–281 (GCGKTL) serves as a coordination point for ATP. A docks into pockets in the proteasome alpha-ring region spans residues 587–588 (YL).

The protein belongs to the AAA ATPase family. Homohexamer. Assembles into a hexameric ring structure that caps the 20S proteasome core. Strongly interacts with the prokaryotic ubiquitin-like protein Pup through a hydrophobic interface; the interacting region of ARC lies in its N-terminal coiled-coil domain. There is one Pup binding site per ARC hexamer ring. Upon ATP-binding, the C-terminus of ARC interacts with the alpha-rings of the proteasome core, possibly by binding to the intersubunit pockets.

It participates in protein degradation; proteasomal Pup-dependent pathway. Functionally, ATPase which is responsible for recognizing, binding, unfolding and translocation of pupylated proteins into the bacterial 20S proteasome core particle. May be essential for opening the gate of the 20S proteasome via an interaction with its C-terminus, thereby allowing substrate entry and access to the site of proteolysis. Thus, the C-termini of the proteasomal ATPase may function like a 'key in a lock' to induce gate opening and therefore regulate proteolysis. The chain is Proteasome-associated ATPase from Streptomyces avermitilis (strain ATCC 31267 / DSM 46492 / JCM 5070 / NBRC 14893 / NCIMB 12804 / NRRL 8165 / MA-4680).